The chain runs to 217 residues: Probable transaldolase (217 aa).

Lysine 83 functions as the Schiff-base intermediate with substrate in the catalytic mechanism.

It belongs to the transaldolase family. Type 3B subfamily.

Its subcellular location is the cytoplasm. The enzyme catalyses D-sedoheptulose 7-phosphate + D-glyceraldehyde 3-phosphate = D-erythrose 4-phosphate + beta-D-fructose 6-phosphate. It functions in the pathway carbohydrate degradation; pentose phosphate pathway; D-glyceraldehyde 3-phosphate and beta-D-fructose 6-phosphate from D-ribose 5-phosphate and D-xylulose 5-phosphate (non-oxidative stage): step 2/3. Its function is as follows. Transaldolase is important for the balance of metabolites in the pentose-phosphate pathway. In Novosphingobium aromaticivorans (strain ATCC 700278 / DSM 12444 / CCUG 56034 / CIP 105152 / NBRC 16084 / F199), this protein is Probable transaldolase.